Reading from the N-terminus, the 200-residue chain is A-type ATP synthase subunit E 3 (200 aa).

It belongs to the V-ATPase E subunit family. In terms of assembly, has multiple subunits with at least A(3), B(3), C, D, E, F, H, I and proteolipid K(x).

Its subcellular location is the cell membrane. In terms of biological role, component of the A-type ATP synthase that produces ATP from ADP in the presence of a proton gradient across the membrane. This is A-type ATP synthase subunit E 3 from Methanospirillum hungatei JF-1 (strain ATCC 27890 / DSM 864 / NBRC 100397 / JF-1).